We begin with the raw amino-acid sequence, 258 residues long: Imidazole glycerol phosphate synthase subunit HisF (258 aa).

Residues Asp11 and Asp130 contribute to the active site.

The protein belongs to the HisA/HisF family. As to quaternary structure, heterodimer of HisH and HisF.

It is found in the cytoplasm. It catalyses the reaction 5-[(5-phospho-1-deoxy-D-ribulos-1-ylimino)methylamino]-1-(5-phospho-beta-D-ribosyl)imidazole-4-carboxamide + L-glutamine = D-erythro-1-(imidazol-4-yl)glycerol 3-phosphate + 5-amino-1-(5-phospho-beta-D-ribosyl)imidazole-4-carboxamide + L-glutamate + H(+). It participates in amino-acid biosynthesis; L-histidine biosynthesis; L-histidine from 5-phospho-alpha-D-ribose 1-diphosphate: step 5/9. IGPS catalyzes the conversion of PRFAR and glutamine to IGP, AICAR and glutamate. The HisF subunit catalyzes the cyclization activity that produces IGP and AICAR from PRFAR using the ammonia provided by the HisH subunit. The polypeptide is Imidazole glycerol phosphate synthase subunit HisF (Enterobacter sp. (strain 638)).